Consider the following 105-residue polypeptide: Ig lambda chain C region (105 aa).

One can recognise an Ig-like domain in the interval 6–100; that stretch reads PSVILFPPSS…EGHTVEKSLA (95 aa). Cys-27 and Cys-86 form a disulfide bridge.

This is Ig lambda chain C region from Oryctolagus cuniculus (Rabbit).